The sequence spans 344 residues: MAQSTTSETHTRDLDRDCTTLSRHVLEQLQSFSPEAQDLAALMQRIGLAAKLIARRLSHAGLVDDALGFTGEINVQGEAVKRMDVYANQVFISVFRQSGLVCRLASEEMEKPYYIPENCPIGRYTLLYDPLDGSANVDVDLNVGSIFAVRRQEFYDESHEAKDLLQPGDRQIAAGYVLYGASTLLVYSMGQGVHVFVLDPSLGEFVLAQSDIQLPNSGQIYSVNEGNFWQWPEGYRQYIREMHRREGYSGRYSGALVADFHRILMQGGVFLYPETVKNPTGKLRLLYEAAPMAFLAEQAGGKASDGQKPILLRQPQALHERCPLIIGSAADVDFVEACLAESVP.

Residues glutamate 107, aspartate 129, leucine 131, and aspartate 132 each contribute to the Mg(2+) site. Substrate contacts are provided by asparagine 224, tyrosine 252, and lysine 282. A Mg(2+)-binding site is contributed by glutamate 288.

This sequence belongs to the FBPase class 1 family. In terms of assembly, homotetramer. The cofactor is Mg(2+).

The protein resides in the cytoplasm. It carries out the reaction beta-D-fructose 1,6-bisphosphate + H2O = beta-D-fructose 6-phosphate + phosphate. It participates in carbohydrate biosynthesis; Calvin cycle. In Synechococcus sp. (strain ATCC 27144 / PCC 6301 / SAUG 1402/1) (Anacystis nidulans), this protein is Fructose-1,6-bisphosphatase class 1.